Reading from the N-terminus, the 549-residue chain is Glucose-6-phosphate isomerase (549 aa).

Catalysis depends on Glu355, which acts as the Proton donor. Active-site residues include His386 and Lys514.

Belongs to the GPI family.

Its subcellular location is the cytoplasm. The enzyme catalyses alpha-D-glucose 6-phosphate = beta-D-fructose 6-phosphate. It functions in the pathway carbohydrate biosynthesis; gluconeogenesis. Its pathway is carbohydrate degradation; glycolysis; D-glyceraldehyde 3-phosphate and glycerone phosphate from D-glucose: step 2/4. Catalyzes the reversible isomerization of glucose-6-phosphate to fructose-6-phosphate. This is Glucose-6-phosphate isomerase from Cronobacter sakazakii (strain ATCC BAA-894) (Enterobacter sakazakii).